The primary structure comprises 320 residues: MNAVRGRFAARTVRVKAPGKINVSLDVGPLREDGYHSVASVYLAVSLYEEVAATSTATEGITVSISPASTLDLSDVDIPLDERNLAYKAAAIMADVSEHSTGVHLEITKRVPVAGGMGGGSADAAATLLACDALWNSGLSRDELAHLAAELGADVPFALLGGTAVGLGVGDELSPALAKAQMDWVLVTADYGLSTPEVFRTLDRLRLAEGLTVDEPAAVDPKILQALRSGDADALSRVLVNDLQRASIELAPGLRDTLGLGESCGAIAGLVSGSGPTVALLTHSPEAAAGLAEDLGHHGLNALAVHGPVPGARIISDTLL.

K20 is an active-site residue. Position 112–122 (112–122) interacts with ATP; sequence PVAGGMGGGSA. Residue D154 is part of the active site.

It belongs to the GHMP kinase family. IspE subfamily.

It carries out the reaction 4-CDP-2-C-methyl-D-erythritol + ATP = 4-CDP-2-C-methyl-D-erythritol 2-phosphate + ADP + H(+). It participates in isoprenoid biosynthesis; isopentenyl diphosphate biosynthesis via DXP pathway; isopentenyl diphosphate from 1-deoxy-D-xylulose 5-phosphate: step 3/6. Its function is as follows. Catalyzes the phosphorylation of the position 2 hydroxy group of 4-diphosphocytidyl-2C-methyl-D-erythritol. The chain is 4-diphosphocytidyl-2-C-methyl-D-erythritol kinase from Arthrobacter sp. (strain FB24).